Reading from the N-terminus, the 300-residue chain is Bifunctional protein FolD 2 (300 aa).

NADP(+) contacts are provided by residues 165 to 167 (GRS), Ser-190, and Ile-231.

This sequence belongs to the tetrahydrofolate dehydrogenase/cyclohydrolase family. Homodimer.

It carries out the reaction (6R)-5,10-methylene-5,6,7,8-tetrahydrofolate + NADP(+) = (6R)-5,10-methenyltetrahydrofolate + NADPH. The enzyme catalyses (6R)-5,10-methenyltetrahydrofolate + H2O = (6R)-10-formyltetrahydrofolate + H(+). Its pathway is one-carbon metabolism; tetrahydrofolate interconversion. Its function is as follows. Catalyzes the oxidation of 5,10-methylenetetrahydrofolate to 5,10-methenyltetrahydrofolate and then the hydrolysis of 5,10-methenyltetrahydrofolate to 10-formyltetrahydrofolate. The sequence is that of Bifunctional protein FolD 2 from Pseudomonas syringae pv. syringae (strain B728a).